A 502-amino-acid polypeptide reads, in one-letter code: MTQEEISGISQDENNLIAERRSKLTALRQTGNAFPNDYRRDNLARILHEKYDSCSREELESSQVTVKVAGRMLFKRVMGKASFATIQDMSGRIQLYISNDHTGETAHEAFRHYDLGDILGAEGVLFKTRTDELSLRVTQLHLLTKSLRPLPEKFHGLADQEQKYRRRYLDLITNEDTRRVFAIRSKIIQAIREFLVDRDYLEVETPMMHSIPGGATARPFVTHHNALDMSLYLRIAPELYLKRLVVGGMEKVFEINRNFRNEGISTRHNPEFTMLEFYEAYQDHNYLMDLTESMLREVALKVSGTTRIVYQQREMDLAQPFARLTIAQAILKYHPEYSDAQLNDRDFLTKALQAKGVTVNPDSGIGGLQLALFDETTEHLLFEPVFIVDYPAEVSPLARCNDANPEITDRFELYIAGREIANGFSELNDPEDQANRFLEQARAKEAGDLEAMHYDADYIQALEYGLPPTAGEGIGIDRLVMLLTDSPSIRDVILFPQLRKED.

Mg(2+)-binding residues include glutamate 412 and glutamate 419.

This sequence belongs to the class-II aminoacyl-tRNA synthetase family. Homodimer. The cofactor is Mg(2+).

The protein localises to the cytoplasm. The catalysed reaction is tRNA(Lys) + L-lysine + ATP = L-lysyl-tRNA(Lys) + AMP + diphosphate. This chain is Lysine--tRNA ligase, found in Nitrosomonas europaea (strain ATCC 19718 / CIP 103999 / KCTC 2705 / NBRC 14298).